A 410-amino-acid polypeptide reads, in one-letter code: Serine hydroxymethyltransferase (410 aa).

(6S)-5,6,7,8-tetrahydrofolate is bound by residues leucine 116 and 120–122; that span reads GHL. The residue at position 225 (lysine 225) is an N6-(pyridoxal phosphate)lysine. 349–351 is a (6S)-5,6,7,8-tetrahydrofolate binding site; that stretch reads SPF.

It belongs to the SHMT family. Homodimer. Pyridoxal 5'-phosphate serves as cofactor.

It localises to the cytoplasm. The catalysed reaction is (6R)-5,10-methylene-5,6,7,8-tetrahydrofolate + glycine + H2O = (6S)-5,6,7,8-tetrahydrofolate + L-serine. It participates in one-carbon metabolism; tetrahydrofolate interconversion. Its pathway is amino-acid biosynthesis; glycine biosynthesis; glycine from L-serine: step 1/1. In terms of biological role, catalyzes the reversible interconversion of serine and glycine with tetrahydrofolate (THF) serving as the one-carbon carrier. This reaction serves as the major source of one-carbon groups required for the biosynthesis of purines, thymidylate, methionine, and other important biomolecules. Also exhibits THF-independent aldolase activity toward beta-hydroxyamino acids, producing glycine and aldehydes, via a retro-aldol mechanism. The sequence is that of Serine hydroxymethyltransferase from Leuconostoc citreum (strain KM20).